A 1170-amino-acid polypeptide reads, in one-letter code: Thrombospondin-1 (1170 aa).

A signal peptide spans 1–18 (MGLAWGLGVLFLMHVCGT). Positions 47 to 95 (RLVKGPDPSSPAFRIEDANLIPPVPDDKFQDLVDAVRAEKGFLLLASLR) are heparin-binding. The Laminin G-like domain occupies 65 to 270 (NLIPPVPDDK…HKTKDLQAIC (206 aa)). The cysteines at positions 171 and 232 are disulfide-linked. Residues Asn248 and Asn360 are each glycosylated (N-linked (GlcNAc...) asparagine). Positions 316 to 373 (PLCYHNGVQYRNNEEWTVDSCTECHCQNSVTICKKVSCPIMPCSNATVPDGECCPRCW) constitute a VWFC domain. 3 consecutive TSP type-1 domains span residues 379 to 429 (DDGW…QECD), 435 to 490 (DGGW…DACP), and 492 to 547 (NGGW…QDCP). The C-linked (Man) tryptophan glycan is linked to Trp385. 3 disulfides stabilise this stretch: Cys391/Cys423, Cys395/Cys428, and Cys406/Cys413. Ser394 is a glycosylation site (O-linked (Fuc...) serine). 2 C-linked (Man) tryptophan glycosylation sites follow: Trp438 and Trp441. 3 cysteine pairs are disulfide-bonded: Cys447/Cys484, Cys451/Cys489, and Cys462/Cys474. Thr450 carries O-linked (Fuc...) threonine glycosylation. C-linked (Man) tryptophan glycosylation occurs at Trp498. Cystine bridges form between Cys504–Cys541, Cys508–Cys546, Cys519–Cys531, Cys551–Cys562, Cys556–Cys572, Cys575–Cys586, Cys592–Cys608, Cys599–Cys617, Cys620–Cys644, Cys650–Cys663, Cys657–Cys676, Cys678–Cys689, Cys705–Cys713, Cys718–Cys738, Cys754–Cys774, Cys777–Cys797, Cys813–Cys833, Cys836–Cys856, Cys874–Cys894, Cys910–Cys930, and Cys946–Cys1167. Residue Thr507 is glycosylated (O-linked (Fuc...) threonine). The tract at residues 531–1152 (CVGDVTENQI…YAGGRLGLFV (622 aa)) is involved in retention in extracellular matrix (ECM); involved in trimer formation. The EGF-like 1 domain occupies 547–587 (PIDGCLSNPCFAGVKCTSYPDGSWKCGACPPGYSGNGIQCT). Ser553 carries an O-linked (Xyl) serine glycan. The EGF-like 2 domain occupies 646-690 (PRNPCTDGTHDCNKNAKCNYLGHYSDPMYRCECKPGYAGNGIICG). TSP type-3 repeat units follow at residues 691-726 (EDTD…NSGQ), 727-762 (EDYD…NPAQ), 763-785 (YDYD…NPDQ), 786-821 (ADTD…NVDQ), 822-844 (RDTD…NPDQ), 845-882 (LDSD…NANQ), 883-918 (ADHD…NPDQ), and 919-954 (KDSD…DISE). Asn708 carries N-linked (GlcNAc...) asparagine glycosylation. A disordered region spans residues 839–934 (EHNPDQLDSD…GRGDACKDDF (96 aa)). 3 stretches are compositionally biased toward basic and acidic residues: residues 840–854 (HNPD…RIGD), 883–894 (ADHDKDGKGDAC), and 917–934 (DQKD…KDDF). Positions 926–928 (RGD) match the Cell attachment site motif. The region spanning 958 to 1170 (RRFQMIPLDP…SDLKYECRDP (213 aa)) is the TSP C-terminal domain. N-linked (GlcNAc...) asparagine glycosylation is present at Asn1067.

Belongs to the thrombospondin family. As to quaternary structure, homotrimer; disulfide-linked. Can bind to fibrinogen, fibronectin, laminin, type V collagen and integrins alpha-V/beta-1, alpha-V/beta-3 and alpha-IIb/beta-3. Binds heparin. Interacts (via the C-terminal domain) with CD47. Interacts (via the TSP type I repeats) with CD36; the interaction conveys an antiangiogenic effect. Interacts (via the TSP type I repeats) with HRG; the interaction blocks the antiangiogenic effect of THBS1 with CD36. Interacts with ATF6 (via lumenal domain). Interacts with FN1; this interaction is enhanced by TNFAIP6, which may act as a bridging molecule between FN1 and THBS1. Interacts with SIRPA; the interaction stimulates phosphorylation of SIRPA. Expressed by platelets (at protein level). Expressed by monocyte-derived immature and mature dendritic cells (at protein level).

The protein resides in the secreted. The protein localises to the cell surface. Its subcellular location is the extracellular space. It localises to the extracellular matrix. It is found in the endoplasmic reticulum. The protein resides in the sarcoplasmic reticulum. Its function is as follows. Adhesive glycoprotein that mediates cell-to-cell and cell-to-matrix interactions. Multifunctional, involved in inflammation, angiogenesis, wound healing, reactive oxygen species (ROS) signaling, nitrous oxide (NO) signaling, apoptosis, senescence, aging, cellular self-renewal, stemness, and cardiovascular and metabolic homeostasis. Negatively modulates dendritic cell activation and cytokine release, as part of an autocrine feedback loop, contributing to the resolution of inflammation and immune homeostasis. Ligand for receptor CD47. Modulates nitrous oxide (NO) signaling via CD47, hence playing a role as a pressor agent, supporting blood pressure. Plays a role in endothelial cell senescence, acting via CD47, by increasing the abundance and activation of NADPH oxidase NOX1, and so generating excess ROS. Inhibits stem cell self-renewal, acting via CD47 signaling, probably by regulation of the stem cell transcription factors POU5F1/OCT4, SOX2, MYC/c-Myc and KLF4. Negatively modulates wound healing, acting via CD47. Ligand for receptor CD36. Involved in inducing apoptosis in podocytes in response to elevated free fatty acids, acting via CD36. Plays a role in suppressing angiogenesis, acting, depending on context, via CD36 or CD47. Promotes cellular senescence in a TP53-CDKN1A-RB1 signaling-dependent manner. Ligand for immunoglobulin-like cell surface receptor SIRPA. Involved in ROS signaling in non-phagocytic cells, stimulating NADPH oxidase-derived ROS production, acting via interaction with SIRPA. Plays a role in metabolic dysfunction in diet-induced obesity, perhaps acting by exacerbating adipose inflammatory activity; its effects may be mediated, at least in part, through enhanced adipocyte proliferation. Plays a role in ER stress response, via its interaction with the activating transcription factor 6 alpha (ATF6) which produces adaptive ER stress response factors. May be involved in age-related conditions, including metabolic dysregulation, during normal aging. In Homo sapiens (Human), this protein is Thrombospondin-1.